The chain runs to 474 residues: Chromosomal replication initiator protein DnaA (474 aa).

Residues 1-73 (MTNIEQERWS…LSCWQAEMPE (73 aa)) are domain I, interacts with DnaA modulators. The segment at 73-130 (EVHRIDLTVRTAMRCAAPAKEQAAPIEPRREDNRAAAHDLRVSATAPVSANHEALGGS) is domain II. The segment at 131–353 (PLDPRLTFSS…GAINRLLAHS (223 aa)) is domain III, AAA+ region. ATP is bound by residues Gly-178, Gly-180, Lys-181, and Thr-182. The segment at 354-474 (KLNAQPVTLE…VESLKRQLQE (121 aa)) is domain IV, binds dsDNA.

Belongs to the DnaA family. In terms of assembly, oligomerizes as a right-handed, spiral filament on DNA at oriC.

The protein localises to the cytoplasm. Functionally, plays an essential role in the initiation and regulation of chromosomal replication. ATP-DnaA binds to the origin of replication (oriC) to initiate formation of the DNA replication initiation complex once per cell cycle. Binds the DnaA box (a 9 base pair repeat at the origin) and separates the double-stranded (ds)DNA. Forms a right-handed helical filament on oriC DNA; dsDNA binds to the exterior of the filament while single-stranded (ss)DNA is stabiized in the filament's interior. The ATP-DnaA-oriC complex binds and stabilizes one strand of the AT-rich DNA unwinding element (DUE), permitting loading of DNA polymerase. After initiation quickly degrades to an ADP-DnaA complex that is not apt for DNA replication. Binds acidic phospholipids. This chain is Chromosomal replication initiator protein DnaA, found in Rhodopseudomonas palustris (strain BisA53).